The sequence spans 229 residues: Urease accessory protein UreF (229 aa).

The protein belongs to the UreF family. UreD, UreF and UreG form a complex that acts as a GTP-hydrolysis-dependent molecular chaperone, activating the urease apoprotein by helping to assemble the nickel containing metallocenter of UreC. The UreE protein probably delivers the nickel.

The protein resides in the cytoplasm. In terms of biological role, required for maturation of urease via the functional incorporation of the urease nickel metallocenter. This Methylobacterium radiotolerans (strain ATCC 27329 / DSM 1819 / JCM 2831 / NBRC 15690 / NCIMB 10815 / 0-1) protein is Urease accessory protein UreF.